The primary structure comprises 86 residues: Small ribosomal subunit protein bS20 (86 aa).

Residues 1-27 form a disordered region; it reads MANNKSAKKRAIQAEKRRQHNASRRSM.

It belongs to the bacterial ribosomal protein bS20 family.

Functionally, binds directly to 16S ribosomal RNA. This Vibrio vulnificus (strain CMCP6) protein is Small ribosomal subunit protein bS20.